The sequence spans 1045 residues: 3-hydroxy-3-methylglutaryl-coenzyme A reductase 2 (1045 aa).

Residues 1–24 lie on the Cytoplasmic side of the membrane; that stretch reads MSLPLKTIVHLVKPFACTARFSAR. The helical transmembrane segment at 25-45 threads the bilayer; that stretch reads YPIHVIVVAVLLSAAAYLSVT. The Lumenal segment spans residues 46-186; it reads QSYLNEWKLD…FSNKTSEFDQ (141 aa). 4 N-linked (GlcNAc...) asparagine glycosylation sites follow: asparagine 115, asparagine 150, asparagine 158, and asparagine 179. A helical membrane pass occupies residues 187-207; that stretch reads FDLFIILAAYLTLFYTLCCLF. Residues 188 to 356 enclose the SSD domain; sequence DLFIILAAYL…ATFYSAILSM (169 aa). Residues 208–216 lie on the Cytoplasmic side of the membrane; that stretch reads NDMRKIGSK. Residues 217-237 form a helical membrane-spanning segment; that stretch reads FWLSFSALSNSACALYLSLYT. Over 238–243 the chain is Lumenal; the sequence is THSLLK. Residues 244-264 traverse the membrane as a helical segment; sequence KPASLLSLVIGLPFIVVIIGF. Over 265–301 the chain is Cytoplasmic; sequence KHKVRLAAFSLQKFHRISIDKKITVSNIIYEAMFQEG. Residues 302–322 form a helical membrane-spanning segment; sequence AYLIRDYLFYISSFIGCAIYA. The Lumenal segment spans residues 323-324; it reads RH. A helical transmembrane segment spans residues 325-345; sequence LPGLVNFCILSTFMLVFDLLL. Topologically, residues 346–402 are cytoplasmic; that stretch reads SATFYSAILSMKLEINIIHRSTVIRQTLEEDGVVPTTADIIYKDETASEPHFLRSNV. The chain crosses the membrane as a helical span at residues 403 to 423; that stretch reads AIILGKASVIGLLLLINLYVF. Residues 424–497 are Lumenal-facing; sequence TDKLNATILN…DSVSNAIRDQ (74 aa). 2 N-linked (GlcNAc...) asparagine glycosylation sites follow: asparagine 428 and asparagine 455. The helical transmembrane segment at 498-518 threads the bilayer; the sequence is FISKLLFFAFAVSISINVYLL. The Cytoplasmic segment spans residues 519 to 1045; sequence NAAKIHTGYM…GPPCKTSALL (527 aa). Threonine 565 is modified (phosphothreonine). The active-site Charge relay system is glutamate 710. 716-722 is a CoA binding site; the sequence is SAMRGCK. Residues 777 to 779 and 804 to 812 contribute to the NADP(+) site; these read SRF and DAMGMNMIS. Lysine 844 serves as the catalytic Charge relay system. 873–875 is a binding site for CoA; sequence VLK. Aspartate 920 (charge relay system) is an active-site residue. Position 1015-1016 (1015-1016) interacts with CoA; the sequence is SH. The active-site Proton donor is histidine 1016. Residues 1018–1045 form a disordered region; sequence THNRKTNKANELPQPSNKGPPCKTSALL. Residue 1020 to 1021 coordinates NADP(+); the sequence is NR.

It belongs to the HMG-CoA reductase family.

It localises to the endoplasmic reticulum membrane. The protein localises to the nucleus envelope. The enzyme catalyses (R)-mevalonate + 2 NADP(+) + CoA = (3S)-3-hydroxy-3-methylglutaryl-CoA + 2 NADPH + 2 H(+). It participates in metabolic intermediate biosynthesis; (R)-mevalonate biosynthesis; (R)-mevalonate from acetyl-CoA: step 3/3. In terms of biological role, HMG-CoA reductase; part of the first module of ergosterol biosynthesis pathway constitutes by the early steps of the pathway, conserved across all eukaryotes, and which results in the formation of mevalonate from acetyl-coenzyme A (acetyl-CoA). HMG1 and HMG2 catalyze the reduction of hydroxymethylglutaryl-CoA (HMG-CoA) to mevalonate that is the rate-limiting step within the first mosule. The first module starts with the action of the cytosolic acetyl-CoA acetyltransferase ERG10 that catalyzes the formation of acetoacetyl-CoA. The hydroxymethylglutaryl-CoA synthase ERG13 then condenses acetyl-CoA with acetoacetyl-CoA to form HMG-CoA. The rate-limiting step of the early module is the reduction to mevalonate by the 3-hydroxy-3-methylglutaryl-coenzyme A (HMG-CoA) reductases HMG1 and HMG2 which are derived from a single ancestral HMGR gene by gene duplication. The sequence is that of 3-hydroxy-3-methylglutaryl-coenzyme A reductase 2 from Saccharomyces cerevisiae (strain ATCC 204508 / S288c) (Baker's yeast).